A 325-amino-acid chain; its full sequence is Phospho-N-acetylmuramoyl-pentapeptide-transferase (325 aa).

9 helical membrane-spanning segments follow: residues 7 to 27, 57 to 77, 81 to 101, 122 to 142, 146 to 166, 186 to 206, 227 to 247, 252 to 272, and 302 to 322; these read LFVL…FIPF, IVIV…ITGF, LLLL…DDYL, VIAA…FIAI, TFGF…LLGA, IAFG…TALF, VFMG…IAIL, LMLI…IIQV, and VVVT…YIGV.

This sequence belongs to the glycosyltransferase 4 family. MraY subfamily. Mg(2+) serves as cofactor.

It is found in the cell membrane. It carries out the reaction UDP-N-acetyl-alpha-D-muramoyl-L-alanyl-gamma-D-glutamyl-meso-2,6-diaminopimeloyl-D-alanyl-D-alanine + di-trans,octa-cis-undecaprenyl phosphate = di-trans,octa-cis-undecaprenyl diphospho-N-acetyl-alpha-D-muramoyl-L-alanyl-D-glutamyl-meso-2,6-diaminopimeloyl-D-alanyl-D-alanine + UMP. Its pathway is cell wall biogenesis; peptidoglycan biosynthesis. Catalyzes the initial step of the lipid cycle reactions in the biosynthesis of the cell wall peptidoglycan: transfers peptidoglycan precursor phospho-MurNAc-pentapeptide from UDP-MurNAc-pentapeptide onto the lipid carrier undecaprenyl phosphate, yielding undecaprenyl-pyrophosphoryl-MurNAc-pentapeptide, known as lipid I. The protein is Phospho-N-acetylmuramoyl-pentapeptide-transferase of Shouchella clausii (strain KSM-K16) (Alkalihalobacillus clausii).